The primary structure comprises 813 residues: Glycerol-3-phosphate acyltransferase (813 aa).

The short motif at 304–309 (CHRSHI) is the HXXXXD motif element.

This sequence belongs to the GPAT/DAPAT family.

The protein resides in the cell inner membrane. The catalysed reaction is sn-glycerol 3-phosphate + an acyl-CoA = a 1-acyl-sn-glycero-3-phosphate + CoA. The protein operates within phospholipid metabolism; CDP-diacylglycerol biosynthesis; CDP-diacylglycerol from sn-glycerol 3-phosphate: step 1/3. This is Glycerol-3-phosphate acyltransferase from Actinobacillus succinogenes (strain ATCC 55618 / DSM 22257 / CCUG 43843 / 130Z).